The primary structure comprises 592 residues: Potassium-transporting ATPase potassium-binding subunit (592 aa).

The next 10 helical transmembrane spans lie at 7-27 (ILLGIFLVVLLLTVKPLGTYI), 60-80 (LKYACAILLFNVLGVLAVYAL), 132-152 (ALAVQNFFSAATGIVVVIALI), 175-195 (LHVLLPISIIYAVFLTGQGVI), 279-299 (LSNFIQMLSIFLIPAALCFTF), 310-330 (WAVLAAMTLMFVALAYTAMHF), 409-429 (GLYGMLVFAIMAVFIAGLMIG), 449-469 (IAILVTPLLVLVGTAIAVMLA), 513-533 (VMLGIAMWFGRFGVIVPVLAI), and 556-576 (LFVTLLIGTVLLVGLLNYVPA).

Belongs to the KdpA family. In terms of assembly, the system is composed of three essential subunits: KdpA, KdpB and KdpC.

The protein localises to the cell inner membrane. Part of the high-affinity ATP-driven potassium transport (or Kdp) system, which catalyzes the hydrolysis of ATP coupled with the electrogenic transport of potassium into the cytoplasm. This subunit binds the periplasmic potassium ions and delivers the ions to the membrane domain of KdpB through an intramembrane tunnel. The protein is Potassium-transporting ATPase potassium-binding subunit of Dechloromonas aromatica (strain RCB).